An 877-amino-acid chain; its full sequence is Envelope glycoprotein gp160 (877 aa).

A signal peptide spans 1–19; it reads MKLTLLIGILLIGIGVVLN. At 20-707 the chain is on the extracellular side; that stretch reads TRQQWVTVFY…SWFDFSKWLN (688 aa). Residues N36, N69, N118, N135, N148, N158, N173, N204, N216, N258, N261, N272, N282, N288, N300, N312, N322, N379, N420, N431, N495, and N498 are each glycosylated (N-linked (GlcNAc...) asparagine; by host). Cystine bridges form between C102-C224, C109-C215, C114-C174, C237-C267, and C247-C259. Positions 114 to 173 are V1; the sequence is CVELNSSEPTTTPKSTTASTTNITASTTTLPCVQNKTSTVLESCNETIIEKELNEEPASN. The interval 174–215 is V2; sequence CTFAMAGYVRDQKKKYSVVWNDAEIMCKKGNNSNRECYMIHC. The interval 317 to 349 is V3; sequence CKRPGNKTVLPVTIMAGLVFHSQRYNTRLRQAW. Cysteines 317 and 350 form a disulfide. 2 disulfide bridges follow: C402-C478 and C409-C451. The segment at 409 to 451 is V4; that stretch reads CKMDWFLNYLNNRTVDPDHNPCNGTKGKGKAPGPCAQRTYVAC. The tract at residues 494-501 is V5; sequence KNRTNVTL. A fusion peptide region spans residues 544–564; it reads VPFVLGFLGFLGAAGTAMGAA. The interval 607 to 623 is immunosuppression; that stretch reads LNARVTALEKYLEDQAR. N652 and N668 each carry an N-linked (GlcNAc...) asparagine; by host glycan. A coiled-coil region spans residues 668 to 692; the sequence is NITTQLEEARAQEEKNLDAYQKLSS. An MPER; binding to GalCer region spans residues 689 to 710; sequence KLSSWSDFWSWFDFSKWLNILK. Residues 708–728 form a helical membrane-spanning segment; that stretch reads ILKIGFLDVLGIIGLRLLYTV. At 729–877 the chain is on the cytoplasmic side; the sequence is YSCIARVRQG…VRQGLEGILN (149 aa). The YXXL motif; contains endocytosis signal motif lies at 739 to 742; sequence YSPL. Residues 751–779 are disordered; the sequence is WKGQPDNAEGPGEGGDKRKNSSEPWQKES.

The mature envelope protein (Env) consists of a homotrimer of non-covalently associated gp120-gp41 heterodimers. The resulting complex protrudes from the virus surface as a spike. Interacts with host CD4 and CCR5. Gp120 also interacts with the C-type lectins CD209/DC-SIGN and CLEC4M/DC-SIGNR (collectively referred to as DC-SIGN(R)). As to quaternary structure, the mature envelope protein (Env) consists of a homotrimer of non-covalently associated gp120-gp41 heterodimers. The resulting complex protrudes from the virus surface as a spike. In terms of processing, specific enzymatic cleavages in vivo yield mature proteins. Envelope glycoproteins are synthesized as an inactive precursor that is heavily N-glycosylated and processed likely by host cell furin in the Golgi to yield the mature SU and TM proteins. The cleavage site between SU and TM requires the minimal sequence [KR]-X-[KR]-R.

The protein localises to the virion membrane. Its subcellular location is the host cell membrane. The protein resides in the host endosome membrane. The surface protein gp120 (SU) attaches the virus to the host lymphoid cell by binding to the primary receptor CD4. This interaction induces a structural rearrangement creating a high affinity binding site for a chemokine coreceptor like CCR5. This peculiar 2 stage receptor-interaction strategy allows gp120 to maintain the highly conserved coreceptor-binding site in a cryptic conformation, protected from neutralizing antibodies. These changes are transmitted to the transmembrane protein gp41 and are thought to activate its fusogenic potential by unmasking its fusion peptide. Functionally, surface protein gp120 (SU) may target the virus to gut-associated lymphoid tissue (GALT) by binding host ITGA4/ITGB7 (alpha-4/beta-7 integrins), a complex that mediates T-cell migration to the GALT. Interaction between gp120 and ITGA4/ITGB7 would allow the virus to enter GALT early in the infection, infecting and killing most of GALT's resting CD4+ T-cells. This T-cell depletion is believed to be the major insult to the host immune system leading to AIDS. Its function is as follows. The surface protein gp120 is a ligand for CD209/DC-SIGN and CLEC4M/DC-SIGNR, which are respectively found on dendritic cells (DCs), and on endothelial cells of liver sinusoids and lymph node sinuses. These interactions allow capture of viral particles at mucosal surfaces by these cells and subsequent transmission to permissive cells. DCs are professional antigen presenting cells, critical for host immunity by inducing specific immune responses against a broad variety of pathogens. They act as sentinels in various tissues where they take up antigen, process it, and present it to T-cells following migration to lymphoid organs. SIV subverts the migration properties of dendritic cells to gain access to CD4+ T-cells in lymph nodes. Virus transmission to permissive T-cells occurs either in trans (without DCs infection, through viral capture and transmission), or in cis (following DCs productive infection, through the usual CD4-gp120 interaction), thereby inducing a robust infection. In trans infection, bound virions remain infectious over days and it is proposed that they are not degraded, but protected in non-lysosomal acidic organelles within the DCs close to the cell membrane thus contributing to the viral infectious potential during DCs' migration from the periphery to the lymphoid tissues. On arrival at lymphoid tissues, intact virions recycle back to DCs' cell surface allowing virus transmission to CD4+ T-cells. Virion capture also seems to lead to MHC-II-restricted viral antigen presentation, and probably to the activation of SIV-specific CD4+ cells. In terms of biological role, the transmembrane protein gp41 (TM) acts as a class I viral fusion protein. Under the current model, the protein has at least 3 conformational states: pre-fusion native state, pre-hairpin intermediate state, and post-fusion hairpin state. During fusion of viral and target intracellular membranes, the coiled coil regions (heptad repeats) assume a trimer-of-hairpins structure, positioning the fusion peptide in close proximity to the C-terminal region of the ectodomain. The formation of this structure appears to drive apposition and subsequent fusion of viral and target cell membranes. Complete fusion occurs in host cell endosomes. The virus undergoes clathrin-dependent internalization long before endosomal fusion, thus minimizing the surface exposure of conserved viral epitopes during fusion and reducing the efficacy of inhibitors targeting these epitopes. Membranes fusion leads to delivery of the nucleocapsid into the cytoplasm. The envelope glycoprotein gp160 precursor down-modulates cell surface CD4 antigen by interacting with it in the endoplasmic reticulum and blocking its transport to the cell surface. Functionally, the gp120-gp41 heterodimer allows rapid transcytosis of the virus through CD4 negative cells such as simple epithelial monolayers of the intestinal, rectal and endocervical epithelial barriers. Both gp120 and gp41 specifically recognize glycosphingolipids galactosyl-ceramide (GalCer) or 3' sulfo-galactosyl-ceramide (GalS) present in the lipid rafts structures of epithelial cells. Binding to these alternative receptors allows the rapid transcytosis of the virus through the epithelial cells. This transcytotic vesicle-mediated transport of virions from the apical side to the basolateral side of the epithelial cells does not involve infection of the cells themselves. The chain is Envelope glycoprotein gp160 (env) from Cercopithecidae (Old World monkeys).